Consider the following 399-residue polypeptide: Glutathione S-transferase LANCL1 (399 aa).

Ala2 is subject to N-acetylalanine. Lys142 is modified (N6-acetyllysine). Zn(2+) is bound at residue Cys276. Lys317 provides a ligand contact to glutathione. 2 residues coordinate Zn(2+): Cys322 and His323. Glutathione is bound at residue 364 to 367 (RTPD).

The protein belongs to the LanC-like protein family. As to quaternary structure, interacts with the C-terminal of STOM. Interacts with the EPS8 SH3 domain. Interaction with EPS8 is inhibited by glutathione binding. In terms of tissue distribution, strongly expressed in the brain, testis and skeletal muscle. Expressed in the neurons of the cerebellum, the germinal cells of the seminiferous tubules in testis, in liver hepoatocytes and in cardiac myocytes.

The protein localises to the cytoplasm. The protein resides in the cell membrane. It catalyses the reaction RX + glutathione = an S-substituted glutathione + a halide anion + H(+). The enzyme catalyses 1-chloro-2,4-dinitrobenzene + glutathione = 2,4-dinitrophenyl-S-glutathione + chloride + H(+). Its function is as follows. Functions as a glutathione transferase. Catalyzes conjugation of the glutathione (GSH) to artificial substrates 1-chloro-2,4-dinitrobenzene (CDNB) and p-nitrophenyl acetate. Mitigates neuronal oxidative stress during normal postnatal development and in response to oxidative stresses probably through GSH antioxidant defense mechanism. May play a role in EPS8 signaling. Binds glutathione. The chain is Glutathione S-transferase LANCL1 from Rattus norvegicus (Rat).